The chain runs to 645 residues: Acetyl-coenzyme A synthetase (645 aa).

CoA-binding positions include 190 to 193 (RGGR) and Thr308. Residues 384 to 386 (GEP), 408 to 413 (DTWWQT), Asp497, and Arg512 contribute to the ATP site. Ser520 is a binding site for CoA. Arg523 is a binding site for ATP. Val534, His536, and Val539 together coordinate Mg(2+). Lys606 bears the N6-acetyllysine mark.

The protein belongs to the ATP-dependent AMP-binding enzyme family. Mg(2+) serves as cofactor. Acetylated. Deacetylation by the SIR2-homolog deacetylase activates the enzyme.

It carries out the reaction acetate + ATP + CoA = acetyl-CoA + AMP + diphosphate. In terms of biological role, catalyzes the conversion of acetate into acetyl-CoA (AcCoA), an essential intermediate at the junction of anabolic and catabolic pathways. AcsA undergoes a two-step reaction. In the first half reaction, AcsA combines acetate with ATP to form acetyl-adenylate (AcAMP) intermediate. In the second half reaction, it can then transfer the acetyl group from AcAMP to the sulfhydryl group of CoA, forming the product AcCoA. The polypeptide is Acetyl-coenzyme A synthetase (Halorhodospira halophila (strain DSM 244 / SL1) (Ectothiorhodospira halophila (strain DSM 244 / SL1))).